The following is a 98-amino-acid chain: Phosphoribosyl-ATP pyrophosphatase (98 aa).

The protein belongs to the PRA-PH family.

The protein resides in the cytoplasm. The enzyme catalyses 1-(5-phospho-beta-D-ribosyl)-ATP + H2O = 1-(5-phospho-beta-D-ribosyl)-5'-AMP + diphosphate + H(+). It functions in the pathway amino-acid biosynthesis; L-histidine biosynthesis; L-histidine from 5-phospho-alpha-D-ribose 1-diphosphate: step 2/9. The protein is Phosphoribosyl-ATP pyrophosphatase of Haloarcula marismortui (strain ATCC 43049 / DSM 3752 / JCM 8966 / VKM B-1809) (Halobacterium marismortui).